The primary structure comprises 423 residues: Sulfate adenylyltransferase (423 aa).

Belongs to the sulfate adenylyltransferase family.

It carries out the reaction sulfate + ATP + H(+) = adenosine 5'-phosphosulfate + diphosphate. It functions in the pathway sulfur metabolism; hydrogen sulfide biosynthesis; sulfite from sulfate: step 1/3. This Desulfovibrio desulfuricans (strain ATCC 27774 / DSM 6949 / MB) protein is Sulfate adenylyltransferase.